A 165-amino-acid chain; its full sequence is Nucleotide-binding protein Suden_0039 (165 aa).

Belongs to the YajQ family.

Nucleotide-binding protein. This Sulfurimonas denitrificans (strain ATCC 33889 / DSM 1251) (Thiomicrospira denitrificans (strain ATCC 33889 / DSM 1251)) protein is Nucleotide-binding protein Suden_0039.